A 96-amino-acid chain; its full sequence is Co-chaperonin GroES (96 aa).

This sequence belongs to the GroES chaperonin family. In terms of assembly, heptamer of 7 subunits arranged in a ring. Interacts with the chaperonin GroEL.

The protein localises to the cytoplasm. Its function is as follows. Together with the chaperonin GroEL, plays an essential role in assisting protein folding. The GroEL-GroES system forms a nano-cage that allows encapsulation of the non-native substrate proteins and provides a physical environment optimized to promote and accelerate protein folding. GroES binds to the apical surface of the GroEL ring, thereby capping the opening of the GroEL channel. The polypeptide is Co-chaperonin GroES (Haemophilus influenzae (strain PittGG)).